The sequence spans 105 residues: MMLKPSIDTLLDKVPSKYSLVILQAKRAHELESGATPTQAFTSVKPTLQALEEIEAGNVVIHPDPEAKRAAVRARAEAERIAKEEEERKIKEQIAKEKEEEGEKI.

Belongs to the RNA polymerase subunit omega family. As to quaternary structure, the RNAP catalytic core consists of 2 alpha, 1 beta, 1 beta' and 1 omega subunit. When a sigma factor is associated with the core the holoenzyme is formed, which can initiate transcription.

The catalysed reaction is RNA(n) + a ribonucleoside 5'-triphosphate = RNA(n+1) + diphosphate. Promotes RNA polymerase assembly. Latches the N- and C-terminal regions of the beta' subunit thereby facilitating its interaction with the beta and alpha subunits. In Streptococcus mutans serotype c (strain ATCC 700610 / UA159), this protein is DNA-directed RNA polymerase subunit omega.